We begin with the raw amino-acid sequence, 368 residues long: Protein tesmin/TSO1-like CXC 8 (368 aa).

The region spanning 64-185 (KHKGCRCKQS…KCINCKNVSE (122 aa)) is the CRC domain.

This sequence belongs to the lin-54 family.

The protein localises to the nucleus. In terms of biological role, plays a role in development of both male and female reproductive tissues. In Arabidopsis thaliana (Mouse-ear cress), this protein is Protein tesmin/TSO1-like CXC 8 (TCX8).